We begin with the raw amino-acid sequence, 181 residues long: Small ribosomal subunit protein bS16 (181 aa).

Residues Lys150 to Glu181 are disordered. Positions Lys158–Glu181 are enriched in low complexity.

This sequence belongs to the bacterial ribosomal protein bS16 family.

The polypeptide is Small ribosomal subunit protein bS16 (Bacteroides fragilis (strain YCH46)).